We begin with the raw amino-acid sequence, 776 residues long: Protein translocase subunit SecA 2 (776 aa).

ATP contacts are provided by residues glutamine 80, 98-102, and aspartate 486; that span reads GEGKT.

Belongs to the SecA family. Monomer and homodimer. Part of the essential Sec protein translocation apparatus which comprises SecA, SecYEG and auxiliary proteins SecDF. Other proteins may also be involved.

The protein resides in the cell membrane. The protein localises to the cytoplasm. The enzyme catalyses ATP + H2O + cellular proteinSide 1 = ADP + phosphate + cellular proteinSide 2.. In terms of biological role, part of the Sec protein translocase complex. Interacts with the SecYEG preprotein conducting channel. Has a central role in coupling the hydrolysis of ATP to the transfer of proteins into and across the cell membrane, serving as an ATP-driven molecular motor driving the stepwise translocation of polypeptide chains across the membrane. The sequence is that of Protein translocase subunit SecA 2 from Listeria welshimeri serovar 6b (strain ATCC 35897 / DSM 20650 / CCUG 15529 / CIP 8149 / NCTC 11857 / SLCC 5334 / V8).